Consider the following 457-residue polypeptide: Hepatocyte nuclear factor 3-beta (457 aa).

A transactivation domain 1 region spans residues 14 to 93 (DWSSYYAEPE…AGAMAGMGGS (80 aa)). Positions 106–113 (LSPSLSPL) match the Nuclear localization signal motif. Phosphothreonine is present on Thr156. Residues 159–252 (KPPYSYISLI…FENGCYLRRQ (94 aa)) constitute a DNA-binding region (fork-head). Ser212 and Ser283 each carry phosphoserine. The span at 280-292 (AQASQAQLGEAAG) shows a compositional bias: low complexity. The interval 280-365 (AQASQAQLGE…PGLPPEAHLK (86 aa)) is disordered. The segment covering 298–310 (PAGTESPHSSASP) has biased composition (polar residues). Thr301 bears the Phosphothreonine mark. Residues Ser303, Ser306, Ser307, and Ser309 each carry the phosphoserine modification. Positions 339–352 (PGQQQQAAAHLLGP) are enriched in low complexity. The transactivation domain 2 stretch occupies residues 361–457 (EAHLKPEHHY…VYSRPIMNSS (97 aa)). Residues Ser436 and Ser457 each carry the phosphoserine modification.

As to quaternary structure, binds DNA as a monomer. Binds TLE1. Interacts with FOXA1 and FOXA3. Interacts with PRKDC. Interacts with AKT1. Interacts with TET1; this interaction may recruit TET1 to specific genomic loci to mediate their demethylation. In terms of processing, phosphorylation on Thr-156 abolishes binding to target promoters and subsequent transcription activation upon insulin stimulation.

Its subcellular location is the nucleus. It localises to the cytoplasm. Functionally, transcription factor that is involved in embryonic development, establishment of tissue-specific gene expression and regulation of gene expression in differentiated tissues. Is thought to act as a 'pioneer' factor opening the compacted chromatin for other proteins through interactions with nucleosomal core histones and thereby replacing linker histones at target enhancer and/or promoter sites. Binds DNA with the consensus sequence 5'-[AC]A[AT]T[AG]TT[GT][AG][CT]T[CT]-3'. In embryonic development is required for notochord formation. Involved in the development of multiple endoderm-derived organ systems such as the liver, pancreas and lungs; FOXA1 and FOXA2 seem to have at least in part redundant roles. Originally described as a transcription activator for a number of liver genes such as AFP, albumin, tyrosine aminotransferase, PEPCK, etc. Interacts with the cis-acting regulatory regions of these genes. Involved in glucose homeostasis; regulates the expression of genes important for glucose sensing in pancreatic beta-cells and glucose homeostasis. Involved in regulation of fat metabolism. Binds to fibrinogen beta promoter and is involved in IL6-induced fibrinogen beta transcriptional activation. The polypeptide is Hepatocyte nuclear factor 3-beta (FOXA2) (Homo sapiens (Human)).